We begin with the raw amino-acid sequence, 307 residues long: UDP-3-O-acyl-N-acetylglucosamine deacetylase (307 aa).

Zn(2+)-binding residues include H78, H241, and D245. The Proton donor role is filled by H268.

The protein belongs to the LpxC family. It depends on Zn(2+) as a cofactor.

It carries out the reaction a UDP-3-O-[(3R)-3-hydroxyacyl]-N-acetyl-alpha-D-glucosamine + H2O = a UDP-3-O-[(3R)-3-hydroxyacyl]-alpha-D-glucosamine + acetate. Its pathway is glycolipid biosynthesis; lipid IV(A) biosynthesis; lipid IV(A) from (3R)-3-hydroxytetradecanoyl-[acyl-carrier-protein] and UDP-N-acetyl-alpha-D-glucosamine: step 2/6. Catalyzes the hydrolysis of UDP-3-O-myristoyl-N-acetylglucosamine to form UDP-3-O-myristoylglucosamine and acetate, the committed step in lipid A biosynthesis. The chain is UDP-3-O-acyl-N-acetylglucosamine deacetylase from Variovorax paradoxus (strain S110).